Consider the following 388-residue polypeptide: 4-hydroxy-tetrahydrodipicolinate synthase 1, chloroplastic (388 aa).

The interval 1-51 (MPYLQPPRPHPHPHPTSRLSRASPPSPFPFFPAGTSRSGRLQPVPVSGHSA) is disordered. The N-terminal 62 residues, 1–62 (MPYLQPPRPH…RVSKGKFAVA (62 aa)), are a transit peptide targeting the chloroplast. T131 contacts pyruvate. The active-site Proton donor/acceptor is Y217. The Schiff-base intermediate with substrate role is filled by K245. I284 serves as a coordination point for pyruvate.

Belongs to the DapA family. In terms of assembly, tetramer of modified subunits derived from two genes in different combinations.

It localises to the plastid. Its subcellular location is the chloroplast. It catalyses the reaction L-aspartate 4-semialdehyde + pyruvate = (2S,4S)-4-hydroxy-2,3,4,5-tetrahydrodipicolinate + H2O + H(+). The protein operates within amino-acid biosynthesis; L-lysine biosynthesis via DAP pathway; (S)-tetrahydrodipicolinate from L-aspartate: step 3/4. Its activity is regulated as follows. Sensitive to lysine inhibition. This inhibition increase in an allosteric manner with increasing concentration of the inhibitor. In terms of biological role, catalyzes the condensation of (S)-aspartate-beta-semialdehyde [(S)-ASA] and pyruvate to 4-hydroxy-tetrahydrodipicolinate (HTPA). In Triticum aestivum (Wheat), this protein is 4-hydroxy-tetrahydrodipicolinate synthase 1, chloroplastic.